Consider the following 662-residue polypeptide: Polyadenylate-binding protein 4 (662 aa).

A disordered region spans residues 1–23; sequence MAQVQAPSSHSPPPPAVVNDGAA. RRM domains are found at residues 46–124, 134–211, 225–302, and 328–405; these read CSLY…YSSR, GNLF…PFLR, TNVY…KAQK, and LNLY…LAQR. Low complexity-rich tracts occupy residues 480-489 and 506-518; these read PMMQPGQQGP and QQPM…QMMP. Disordered regions lie at residues 480–518 and 634–662; these read PMMQ…QMMP and NQPS…NDHL. A PABC domain is found at 558–635; sequence SAGQLATSLA…ALDVLRNVNQ (78 aa). Residues 634 to 649 show a composition bias toward polar residues; that stretch reads NQPSSQGSEGNKSGSP.

It belongs to the polyadenylate-binding protein type-1 family. In terms of assembly, interacts with ERD15/CID1. Interacts with Turnip mosaic virus (TuMV) VPg-Pro.

It localises to the cytoplasm. Its subcellular location is the nucleus. Functionally, binds the poly(A) tail of mRNA. Appears to be an important mediator of the multiple roles of the poly(A) tail in mRNA biogenesis, stability and translation. During infection with potyvirus TuMV, acts as a potential integral component of the viral replicase complex that could play an important role in the regulation of potyviral RNA-dependent RNA polymerase (RdRp). The sequence is that of Polyadenylate-binding protein 4 (PAB4) from Arabidopsis thaliana (Mouse-ear cress).